The primary structure comprises 461 residues: Siroheme synthase (461 aa).

A precorrin-2 dehydrogenase /sirohydrochlorin ferrochelatase region spans residues 1–204; it reads MDYFPIFCQL…GDTTQAQQQV (204 aa). Residues 22–23 and 43–44 contribute to the NAD(+) site; these read EV and GR. Serine 128 bears the Phosphoserine mark. The uroporphyrinogen-III C-methyltransferase stretch occupies residues 216–461; it reads GEVTLVGAGP…NWFRCEAASA (246 aa). Proline 225 provides a ligand contact to S-adenosyl-L-methionine. Residue aspartate 248 is the Proton acceptor of the active site. Lysine 270 acts as the Proton donor in catalysis. S-adenosyl-L-methionine contacts are provided by residues 301–303, isoleucine 306, 331–332, methionine 382, and glycine 411; these read GGD and TA.

The protein in the N-terminal section; belongs to the precorrin-2 dehydrogenase / sirohydrochlorin ferrochelatase family. This sequence in the C-terminal section; belongs to the precorrin methyltransferase family.

It catalyses the reaction uroporphyrinogen III + 2 S-adenosyl-L-methionine = precorrin-2 + 2 S-adenosyl-L-homocysteine + H(+). It carries out the reaction precorrin-2 + NAD(+) = sirohydrochlorin + NADH + 2 H(+). The catalysed reaction is siroheme + 2 H(+) = sirohydrochlorin + Fe(2+). It functions in the pathway cofactor biosynthesis; adenosylcobalamin biosynthesis; precorrin-2 from uroporphyrinogen III: step 1/1. Its pathway is cofactor biosynthesis; adenosylcobalamin biosynthesis; sirohydrochlorin from precorrin-2: step 1/1. The protein operates within porphyrin-containing compound metabolism; siroheme biosynthesis; precorrin-2 from uroporphyrinogen III: step 1/1. It participates in porphyrin-containing compound metabolism; siroheme biosynthesis; siroheme from sirohydrochlorin: step 1/1. It functions in the pathway porphyrin-containing compound metabolism; siroheme biosynthesis; sirohydrochlorin from precorrin-2: step 1/1. Its function is as follows. Multifunctional enzyme that catalyzes the SAM-dependent methylations of uroporphyrinogen III at position C-2 and C-7 to form precorrin-2 via precorrin-1. Then it catalyzes the NAD-dependent ring dehydrogenation of precorrin-2 to yield sirohydrochlorin. Finally, it catalyzes the ferrochelation of sirohydrochlorin to yield siroheme. The polypeptide is Siroheme synthase (Edwardsiella ictaluri (strain 93-146)).